A 631-amino-acid chain; its full sequence is Polyadenylate-binding protein 3 (631 aa).

RRM domains are found at residues 11 to 89 (ASLY…WSQR), 99 to 175 (GNIF…QFKS), 191 to 268 (PNVY…RAQK), and 294 to 370 (VNLY…LAQR). At tyrosine 140 the chain carries Phosphotyrosine. Phosphoserine is present on serine 315. Lysine 361 carries the post-translational modification N6,N6-dimethyllysine; alternate. Lysine 361 is covalently cross-linked (Glycyl lysine isopeptide (Lys-Gly) (interchain with G-Cter in SUMO2); alternate). Phosphotyrosine is present on tyrosine 364. 3 positions are modified to omega-N-methylarginine: arginine 426, arginine 430, and arginine 449. Arginine 501 is modified (dimethylated arginine). Arginine 513 carries the omega-N-methylarginine modification. Positions 537–614 (QETLTASRLA…AVAVLQAHQA (78 aa)) constitute a PABC domain.

Belongs to the polyadenylate-binding protein type-1 family. As to expression, testis specific.

The protein resides in the cytoplasm. In terms of biological role, binds the poly(A) tail of mRNA. May be involved in cytoplasmic regulatory processes of mRNA metabolism. Binds poly(A) with a slightly lower affinity as compared to PABPC1. The sequence is that of Polyadenylate-binding protein 3 (PABPC3) from Homo sapiens (Human).